Reading from the N-terminus, the 109-residue chain is uncharacterized protein (109 aa).

A helical transmembrane segment spans residues 82–102 (SLSFLLLLFFYFNNYYFLSMT).

The protein localises to the membrane. This is an uncharacterized protein from Saccharomyces cerevisiae (strain ATCC 204508 / S288c) (Baker's yeast).